The primary structure comprises 256 residues: GDSL esterase/lipase CPRD49 (256 aa).

Residues 1 to 27 (MVGPARPQIVLFGSSIVQMSFGHGGWG) form the signal peptide. Serine 15 (nucleophile) is an active-site residue. 2 N-linked (GlcNAc...) asparagine glycosylation sites follow: asparagine 49 and asparagine 79. Histidine 213 is a catalytic residue. Asparagine 243 carries an N-linked (GlcNAc...) asparagine glycan.

Belongs to the 'GDSL' lipolytic enzyme family. As to expression, specifically expressed in anthers (stages 8-12).

It is found in the secreted. This Arabidopsis thaliana (Mouse-ear cress) protein is GDSL esterase/lipase CPRD49 (CPRD49).